Reading from the N-terminus, the 234-residue chain is Glutamine synthetase (234 aa).

One can recognise a GS catalytic domain in the interval 1–234; that stretch reads KAQEPWFGIE…TRLLVETTLL (234 aa). The tract at residues 126 to 157 is disordered; it reads GSGGHVNFSNRQPESPPAGKQSRSSAKKLGKR.

The protein belongs to the glutamine synthetase family. In terms of assembly, homooctamer.

It localises to the cytoplasm. The enzyme catalyses L-glutamate + NH4(+) + ATP = L-glutamine + ADP + phosphate + H(+). The protein is Glutamine synthetase of Dunaliella salina (Green alga).